Reading from the N-terminus, the 149-residue chain is UPF0260 protein Pfl01_1392 (149 aa).

The protein belongs to the UPF0260 family.

The polypeptide is UPF0260 protein Pfl01_1392 (Pseudomonas fluorescens (strain Pf0-1)).